The sequence spans 336 residues: Tryptophan--tRNA ligase (336 aa).

ATP is bound by residues 13-15 (QPS) and 21-22 (GN). The 'HIGH' region motif lies at 14–22 (PSGNLTIGN). D140 is a binding site for L-tryptophan. Residues 152–154 (GQD), I191, and 200–204 (KMSKS) each bind ATP. The 'KMSKS' region motif lies at 200–204 (KMSKS).

This sequence belongs to the class-I aminoacyl-tRNA synthetase family. As to quaternary structure, homodimer.

The protein resides in the cytoplasm. It carries out the reaction tRNA(Trp) + L-tryptophan + ATP = L-tryptophyl-tRNA(Trp) + AMP + diphosphate + H(+). Functionally, catalyzes the attachment of tryptophan to tRNA(Trp). This is Tryptophan--tRNA ligase from Buchnera aphidicola subsp. Schizaphis graminum (strain Sg).